We begin with the raw amino-acid sequence, 60 residues long: LKCHKLVPPFWKTCPEGKNLCYKMYMVSTLTVPVKRGCIDVCPKNSALVKYVCCNTNKCN.

Intrachain disulfides connect Cys3/Cys21, Cys14/Cys38, Cys42/Cys53, and Cys54/Cys59.

This sequence belongs to the three-finger toxin family. Short-chain subfamily. Type IA cytotoxin sub-subfamily. Monomer in solution; Homodimer and oligomer in the presence of negatively charged lipids forming a pore with a size ranging between 20 and 30 Angstroms. As to expression, expressed by the venom gland.

Its subcellular location is the secreted. It localises to the target cell membrane. Functionally, shows cytolytic activity on many different cells by forming pore in lipid membranes. In vivo, increases heart rate or kills the animal by cardiac arrest. In addition, it binds to heparin with high affinity, interacts with Kv channel-interacting protein 1 (KCNIP1) in a calcium-independent manner, and binds to integrin alpha-V/beta-3 (ITGAV/ITGB3) with moderate affinity. The protein is Cytotoxin 8 of Naja annulifera (Banded Egyptian cobra).